The sequence spans 265 residues: Homeobox protein CDX-1 (265 aa).

Residues 9–153 are disordered; sequence KDSPVYPGPA…GGGGSGKTRT (145 aa). Pro residues predominate over residues 30-42; sequence YGPPAPPPAPPQY. The span at 73–92 shows a compositional bias: low complexity; the sequence is AAAYGPGPAAPAASPASLAF. Residues 93 to 108 are compositionally biased toward pro residues; the sequence is GPPPDFSPVPAPPGPG. Residues 110-126 show a composition bias toward low complexity; that stretch reads GLLAQPLGGPGTPSSPG. The segment at residues 154–213 is a DNA-binding region (homeobox); sequence KDKYRVVYTDHQRLELEKEFHYSRYITIRRKSELAANLGLTERQVKIWFQNRRAKERKVN. The segment at 157 to 178 is interaction with DNA; that stretch reads YRVVYTDHQRLELEKEFHYSRY. An interaction with 5-mCpG DNA region spans residues 196-207; it reads RQVKIWFQNRRA. A compositionally biased stretch (basic residues) spans 207–217; it reads AKERKVNKKKQ. The interval 207–265 is disordered; the sequence is AKERKVNKKKQQQQQPPQPPMAHDITATPAGPSLGGLCPSNTSLLATSSPMPVKEEFLP. The span at 245–256 shows a compositional bias: polar residues; sequence PSNTSLLATSSP.

Belongs to the Caudal homeobox family. In terms of tissue distribution, intestinal epithelium.

It is found in the nucleus. In terms of biological role, plays a role in transcriptional regulation. Involved in activated KRAS-mediated transcriptional activation of PRKD1 in colorectal cancer (CRC) cells. Binds to the PRKD1 promoter in colorectal cancer (CRC) cells. Could play a role in the terminal differentiation of the intestine. Binds preferentially to methylated DNA. The sequence is that of Homeobox protein CDX-1 (CDX1) from Homo sapiens (Human).